Consider the following 323-residue polypeptide: Transaldolase (323 aa).

The Schiff-base intermediate with substrate role is filled by Lys-131.

It belongs to the transaldolase family. Type 1 subfamily. Homodimer.

The protein resides in the cytoplasm. It catalyses the reaction D-sedoheptulose 7-phosphate + D-glyceraldehyde 3-phosphate = D-erythrose 4-phosphate + beta-D-fructose 6-phosphate. The protein operates within carbohydrate degradation; pentose phosphate pathway; D-glyceraldehyde 3-phosphate and beta-D-fructose 6-phosphate from D-ribose 5-phosphate and D-xylulose 5-phosphate (non-oxidative stage): step 2/3. In terms of biological role, transaldolase is important for the balance of metabolites in the pentose-phosphate pathway. This chain is Transaldolase, found in Blochmanniella floridana.